Reading from the N-terminus, the 397-residue chain is MRSTTLLALLALVLLYLVSGALVFQALEQPHEQQVQKDLEDGRDQFLKDHPCVSQKNLEGFIKLVAEALGGGANPETSWTNSSNHSSAWNLGSAFFFSGTIITTIGYGNIALHTDAGRLFCIFYALVGIPLFGMLLAGVGDRLGSSLRRGIGHIEAVFLKWHVPPGLVRMLSAVLFLLIGCLLFVLTPTFVFSYMESWSKLEAIYFVIVTLTTVGFGDYVPGDGTGQNSPAYQPLVWFWILFGLAYFASVLTTIGNWLRAVSRRTRAEMGGLTAQAASWTGTVTARVTQRTGPSAPPPEKEQPLLPSSLPAPPAVAEPAHRPGSPAPAEKVETPPPTASALDYPSENLAFIDESSDTQSERGCALPRAPRGRRRPNPTKKPSRPRGPGRLRDKAVPV.

Over 1–3 the chain is Cytoplasmic; that stretch reads MRS. A helical membrane pass occupies residues 4–24; that stretch reads TTLLALLALVLLYLVSGALVF. Over 25–88 the chain is Extracellular; the sequence is QALEQPHEQQ…WTNSSNHSSA (64 aa). Residue N81 is glycosylated (N-linked (GlcNAc...) asparagine). Residues 89–103 constitute an intramembrane region (helical); it reads WNLGSAFFFSGTIIT. 4 residues coordinate K(+): T104, I105, G106, and Y107. The segment at 104 to 109 is selectivity filter 1; the sequence is TIGYGN. Residues 104–110 lie within the membrane without spanning it; it reads TIGYGNI. Residues 111–118 are Extracellular-facing; the sequence is ALHTDAGR. The helical transmembrane segment at 119–151 threads the bilayer; sequence LFCIFYALVGIPLFGMLLAGVGDRLGSSLRRGI. Topologically, residues 152 to 173 are cytoplasmic; it reads GHIEAVFLKWHVPPGLVRMLSA. The chain crosses the membrane as a helical span at residues 174–195; the sequence is VLFLLIGCLLFVLTPTFVFSYM. Topologically, residues 196-200 are extracellular; the sequence is ESWSK. An intramembrane region (helical) is located at residues 201–214; sequence LEAIYFVIVTLTTV. The K(+) site is built by T213, V214, G215, and F216. Residues 213-218 are selectivity filter 2; the sequence is TVGFGD. Residues 215-220 lie within the membrane without spanning it; the sequence is GFGDYV. Residues 221–234 are Extracellular-facing; the sequence is PGDGTGQNSPAYQP. Residues 235–261 traverse the membrane as a helical segment; that stretch reads LVWFWILFGLAYFASVLTTIGNWLRAV. At 262–397 the chain is on the cytoplasmic side; that stretch reads SRRTRAEMGG…GRLRDKAVPV (136 aa). Residues 282–292 show a composition bias toward polar residues; that stretch reads TVTARVTQRTG. The interval 282-397 is disordered; that stretch reads TVTARVTQRT…GRLRDKAVPV (116 aa). Residues 369-388 are compositionally biased toward basic residues; the sequence is PRGRRRPNPTKKPSRPRGPG.

Belongs to the two pore domain potassium channel (TC 1.A.1.8) family. In terms of assembly, homodimer; disulfide-linked. Forms heterodimers with other 2-pore domain K(+) channel subunits, such as KCNK2 and KCNK10. Detected in brain, and at much lower levels in liver, skeletal muscle and testis.

It localises to the cell membrane. It is found in the cell projection. The protein resides in the axon. The enzyme catalyses K(+)(in) = K(+)(out). The catalysed reaction is Rb(+)(in) = Rb(+)(out). It carries out the reaction Cs(+)(in) = Cs(+)(out). Activated by various stimuli including intracellular basic pH, mechanical stretch and heat and polyunsaturated fatty acids such as arachidonic acid. K(+) channel that conducts voltage-dependent outward rectifying currents upon membrane depolarization. Voltage sensing is coupled to K(+) electrochemical gradient in an 'ion flux gating' mode where outward but not inward ion flow opens the gate. Converts to voltage-independent 'leak' conductance mode upon stimulation by various stimuli including mechanical membrane stretch, basic pH, heat and lipids. Homo- and heterodimerizes to form functional channels with distinct regulatory and gating properties. At trigeminal A-beta afferent nerves, the heterodimer of KCNK2/TREK-1 and KCNK4/TRAAK is mostly coexpressed at nodes of Ranvier where it conducts voltage-independent mechanosensitive and thermosensitive currents, allowing rapid action potential repolarization, high speed and high frequence saltatory conduction on myelinated nerves to ensure prompt sensory responses. Permeable to other monovalent cations such as Rb(+) and Cs(+). This chain is Potassium channel subfamily K member 4, found in Rattus norvegicus (Rat).